A 600-amino-acid polypeptide reads, in one-letter code: Aspartate--tRNA(Asp/Asn) ligase (600 aa).

Residue Glu-187 coordinates L-aspartate. Positions 211 to 214 (QIFK) are aspartate. Positions 233 and 463 each coordinate L-aspartate. ATP is bound at residue 233–235 (RDE). Glu-497 is a binding site for ATP. Arg-504 is an L-aspartate binding site. Position 549-552 (549-552 (GVDR)) interacts with ATP.

The protein belongs to the class-II aminoacyl-tRNA synthetase family. Type 1 subfamily. As to quaternary structure, homodimer.

It localises to the cytoplasm. The enzyme catalyses tRNA(Asx) + L-aspartate + ATP = L-aspartyl-tRNA(Asx) + AMP + diphosphate. In terms of biological role, aspartyl-tRNA synthetase with relaxed tRNA specificity since it is able to aspartylate not only its cognate tRNA(Asp) but also tRNA(Asn). Reaction proceeds in two steps: L-aspartate is first activated by ATP to form Asp-AMP and then transferred to the acceptor end of tRNA(Asp/Asn). The protein is Aspartate--tRNA(Asp/Asn) ligase of Wolbachia pipientis wMel.